A 373-amino-acid polypeptide reads, in one-letter code: Probable G-protein coupled receptor 45 (373 aa).

At 1-38 the chain is on the extracellular side; it reads MACNSTPMGTYEHLLLNVSNTLDPGDTPLSAPLRISLA. Asparagine 17 is a glycosylation site (N-linked (GlcNAc...) asparagine). Residues 39 to 59 form a helical membrane-spanning segment; that stretch reads IMMLLMIVVGFLGNTVVCIIV. Residues 60 to 75 are Cytoplasmic-facing; that stretch reads YQRPAMRSAINLLLAT. The helical transmembrane segment at 76-96 threads the bilayer; it reads LAFSDIMLSLCCMPFTAITLI. At 97–109 the chain is on the extracellular side; that stretch reads TVRWHFGDHFCRL. The helical transmembrane segment at 110 to 130 threads the bilayer; sequence SATLYWFFVLEGVAILLIISV. Over 131–149 the chain is Cytoplasmic; that stretch reads DRFLIIVQRQDKLNPRRAK. A helical membrane pass occupies residues 150–170; sequence MIIAASWVLSFCISAPSFTGW. Over 171–198 the chain is Extracellular; it reads TFMEVPARAPQCVLGYTEFPAERAYVVT. A helical transmembrane segment spans residues 199-219; sequence LVVAVFFAPFGVMLCSYLCIL. At 220–269 the chain is on the cytoplasmic side; the sequence is NTVRKNAVRVHNQSDSLDLRQLTGAGLRRLRRQQQQASLDLSFKTKAFTT. The helical transmembrane segment at 270 to 290 threads the bilayer; sequence ILILFVGFSLCWLPHSVYSLL. The Extracellular segment spans residues 291–306; sequence SAFSRRFYYSASFYTT. Residues 307 to 327 form a helical membrane-spanning segment; that stretch reads STCVLWLSYLKSVFNPIVYCW. At 328–373 the chain is on the cytoplasmic side; sequence RIKKFREACIELLPHTFQILPKVPERIQRKIQPSTIYVCNENQSAV.

The protein belongs to the G-protein coupled receptor 1 family. As to expression, brain specific.

The protein resides in the cell membrane. In terms of biological role, orphan receptor. May play a role in brain function. This is Probable G-protein coupled receptor 45 (Gpr45) from Mus musculus (Mouse).